Consider the following 597-residue polypeptide: ATP-dependent lipid A-core flippase (597 aa).

Transmembrane regions (helical) follow at residues 26-46 (WIFAASIITMAIYAATETGLA), 65-85 (IQIIPLLLIGLFVIRGGANFI), 144-164 (ILTIIRDSLTILGLLAWMAYL), 166-186 (GLLTLIILVTAPLIALIIWWV), 250-270 (AISQPVVQLIAVLGLAGVIHL), and 276-296 (MLAQISVGTFISFITAMMLLL). In terms of domain architecture, ABC transmembrane type-1 spans 29 to 311 (AASIITMAIY…LTKINGTLQR (283 aa)). The ABC transporter domain occupies 343–579 (IRFEHLSFCY…ESHYAGLYRL (237 aa)). 377 to 384 (GHSGSGKS) contacts ATP.

The protein belongs to the ABC transporter superfamily. Lipid exporter (TC 3.A.1.106) family. Homodimer.

The protein resides in the cell inner membrane. The enzyme catalyses ATP + H2O + lipid A-core oligosaccharideSide 1 = ADP + phosphate + lipid A-core oligosaccharideSide 2.. Involved in lipopolysaccharide (LPS) biosynthesis. Translocates lipid A-core from the inner to the outer leaflet of the inner membrane. Transmembrane domains (TMD) form a pore in the inner membrane and the ATP-binding domain (NBD) is responsible for energy generation. This chain is ATP-dependent lipid A-core flippase, found in Nitrosococcus oceani (strain ATCC 19707 / BCRC 17464 / JCM 30415 / NCIMB 11848 / C-107).